The following is an 875-amino-acid chain: Lysine-specific demethylase 7A (875 aa).

The segment at 5–56 (PLYCVCRQPYDVNRFMIECDICKDWFHGSCVQVVEHHAADIDVYHCPNCEPI) adopts a PHD-type zinc-finger fold. A JmjC domain is found at 197–353 (FSDTRMSNLV…MQLRCYEMER (157 aa)). Substrate is bound at residue threonine 246. Fe cation-binding residues include histidine 249 and aspartate 251. Lysine 266 lines the substrate pocket. Histidine 321 lines the Fe cation pocket. Disordered regions lie at residues 442-506 (EDDS…SRKL), 629-710 (SQGE…NTDC), and 742-820 (QGNG…ATAK). The span at 448-462 (AVKTQGSAECSLSRS) shows a compositional bias: polar residues. Over residues 478–505 (QDHHHHRRRHHHHHHHHHHHHHHHHSRK) the composition is skewed to basic residues. Residues 650–663 (SDSKAGDSAEKCSL) are compositionally biased toward basic and acidic residues. Residues 688-697 (SHRHSHHKQA) show a composition bias toward basic residues. A compositionally biased stretch (low complexity) spans 742 to 762 (QGNGSSTSSSSDMWDSSEPCS).

Belongs to the JHDM1 histone demethylase family. JHDM1D subfamily. Fe(2+) is required as a cofactor. Predominantly expressed in brain.

Its subcellular location is the nucleus. Its function is as follows. Histone demethylase required for brain development. Specifically demethylates dimethylated 'Lys-9' and 'Lys-27' (H3K9me2 and H3K27me2, respectively) of histone H3 and monomethylated histone H4 'Lys-20' residue (H4K20Me1), thereby playing a central role in histone code. The chain is Lysine-specific demethylase 7A (kdm7a) from Danio rerio (Zebrafish).